The primary structure comprises 2131 residues: Nonribosomal peptide synthetase criC (2131 aa).

The interval phenylalanine 13–arginine 407 is adenylation 1. The region spanning serine 525 to threonine 601 is the Carrier 1 domain. Serine 562 is subject to O-(pantetheine 4'-phosphoryl)serine. Residues arginine 598–threonine 627 form a disordered region. The interval proline 625–aspartate 1018 is condensation 1. Residues alanine 1069–arginine 1447 are adenylation 2. A Carrier 2 domain is found at serine 1569–glutamine 1647. Serine 1607 bears the O-(pantetheine 4'-phosphoryl)serine mark. The condensation 2 stretch occupies residues serine 1688–methionine 2086.

The protein belongs to the NRP synthetase family. The cofactor is pantetheine 4'-phosphate.

The enzyme catalyses L-tryptophan + L-alanine + 2 ATP = cyclo(L-tryptophyl-L-alanyl) + 2 ADP + 2 phosphate + 2 H(+). Its pathway is secondary metabolite biosynthesis. It participates in alkaloid biosynthesis. Functionally, nonribosomal peptide synthetase; part of the gene cluster that mediates the biosynthesis of echinulin family alkaloid. The pathway begins with the biosynthesis of the cyclic dipeptide cyclo-L-Trp-L-Ala (cyclo-TA) by the NRPS criC via condensation of L-alanine and L-tryptophan. The prenyltransferase criA then catalyzes the first prenylation step, a reverse prenylation reaction at C2, to yield preechinulin. Preechinulin is the substrate of the cytochrome P450 monooxygenase criE that catalyzes the formation of the double bond between C10 and C11 to produce neoechulin A. The unique prenyltransferase criF functions as a competitive enzyme with criE for preechinulin metabolization and uses preechinulin for effective regiospecific prenylations. Preechinulin is prenylated by criF at C5 or C7. C7-prenylation leads to accumulation of tardioxopiperazine B without further modification by criF. In contrast, the C5-prenylated tardioxopiperazine A can be prenylated again by criF, predominantly at C7 to form echinulin or less frequently at C4 to give variecolorin L. CriF also accepts neoechilunin A to produce varlecolorin G (prenylation at C5) or isoechinulin A (prenylation at C7). CriF further converts isoechinulin A into dehydroechinulin. Moreover, a yet unidentified enzyme can also convert neoechilunin A into neoechilunin B by introducing a double bond between positions C14 and C17 and thus provides a further substrate to criF for C5 and C7 prenylation. This chain is Nonribosomal peptide synthetase criC, found in Aspergillus cristatus (Chinese Fuzhuan brick tea-fermentation fungus).